Reading from the N-terminus, the 145-residue chain is Large ribosomal subunit protein uL11 (145 aa).

Belongs to the universal ribosomal protein uL11 family. In terms of assembly, part of the ribosomal stalk of the 50S ribosomal subunit. Interacts with L10 and the large rRNA to form the base of the stalk. L10 forms an elongated spine to which L12 dimers bind in a sequential fashion forming a multimeric L10(L12)X complex. Post-translationally, one or more lysine residues are methylated.

In terms of biological role, forms part of the ribosomal stalk which helps the ribosome interact with GTP-bound translation factors. This chain is Large ribosomal subunit protein uL11, found in Rickettsia prowazekii (strain Madrid E).